The primary structure comprises 355 residues: MSLLDRTLLEIFPQDSDSRDAAKARLDNLVMPHWALGDLMDLAIDLAGMQRTIKPLVDKRAIVTMAGDHGVAAEGVSKFPAEVTVQMVHAIIGGSAGVNALARSAGADVFVVDMGVNADLRDLVEQKKLINKKVGLGTGNIAKGPAMSRAMAVRAVEGGIDVAFALSTKYNIIGTGEMGIGNTTPSAAIAAVCTGKTVEEITGRGSGLNDAELQTKIDIIKKSIEINKPNSKDGLDILAKVGGFEIGGIAGLIIGCAAKKIPVVVDGYISTAGALIAAKIEPFVRDYLIFAHRSVEPGHVHMQEFLGCKRPLLDLNFRLGEGTGAAMAMNLVDGAKAILTDMSTFDEIAVTAPEK.

The Proton acceptor role is filled by Glu321.

This sequence belongs to the CobT family.

It carries out the reaction 5,6-dimethylbenzimidazole + nicotinate beta-D-ribonucleotide = alpha-ribazole 5'-phosphate + nicotinate + H(+). Its pathway is nucleoside biosynthesis; alpha-ribazole biosynthesis; alpha-ribazole from 5,6-dimethylbenzimidazole: step 1/2. Catalyzes the synthesis of alpha-ribazole-5'-phosphate from nicotinate mononucleotide (NAMN) and 5,6-dimethylbenzimidazole (DMB). The protein is Nicotinate-nucleotide--dimethylbenzimidazole phosphoribosyltransferase of Desulfotalea psychrophila (strain LSv54 / DSM 12343).